The primary structure comprises 425 residues: Fe(2+) transport protein 3, chloroplastic (425 aa).

A helical membrane pass occupies residues 65 to 85 (FVAIASILLAGAAGVTIPLIG). Residues 86-97 (RNRRFLQTDGNL) lie on the Cytoplasmic side of the membrane. The chain crosses the membrane as a helical span at residues 98–118 (FVTAKAFAAGVILATGFVHML). Over 119–137 (AGGTEALKNPCLPDFPWSK) the chain is Lumenal. The helical transmembrane segment at 138-158 (FPFPGFFAMIAALITLFVDFM) threads the bilayer. Residues 159–269 (GTQYYERKQE…GLDAVNGARH (111 aa)) lie on the Cytoplasmic side of the membrane. The helical transmembrane segment at 270-290 (IVVSQVLELGIVSHSIIIGLS) threads the bilayer. Topologically, residues 291–301 (LGVSQSPCTIR) are lumenal. The helical transmembrane segment at 302–322 (PLIAALSFHQFFEGFALGGCI) threads the bilayer. Over 323 to 333 (SQAQFRNKSAT) the chain is Cytoplasmic. The helical transmembrane segment at 334 to 354 (IMACFFALTTPIGIGIGTAVA) threads the bilayer. At 355–369 (SSFNSHSVGALVTEG) the chain is on the lumenal side. A helical membrane pass occupies residues 370–390 (ILDSLSAGILVYMALVDLIAA). At 391–404 (DFLSTKMRCNFRLQ) the chain is on the cytoplasmic side. A helical membrane pass occupies residues 405–425 (IVSYVMLFLGAGLMSSLAIWA).

The protein belongs to the ZIP transporter (TC 2.A.5) family.

Its subcellular location is the plastid. It localises to the chloroplast thylakoid membrane. In terms of biological role, may play a role in the transport of iron in the plastids. This is Fe(2+) transport protein 3, chloroplastic (IRT3) from Arabidopsis thaliana (Mouse-ear cress).